Consider the following 469-residue polypeptide: 3-isopropylmalate dehydratase large subunit (469 aa).

Residues C349, C410, and C413 each coordinate [4Fe-4S] cluster.

Belongs to the aconitase/IPM isomerase family. LeuC type 1 subfamily. Heterodimer of LeuC and LeuD. It depends on [4Fe-4S] cluster as a cofactor.

It carries out the reaction (2R,3S)-3-isopropylmalate = (2S)-2-isopropylmalate. Its pathway is amino-acid biosynthesis; L-leucine biosynthesis; L-leucine from 3-methyl-2-oxobutanoate: step 2/4. Catalyzes the isomerization between 2-isopropylmalate and 3-isopropylmalate, via the formation of 2-isopropylmaleate. The sequence is that of 3-isopropylmalate dehydratase large subunit from Azoarcus sp. (strain BH72).